The chain runs to 473 residues: Ribulose bisphosphate carboxylase large chain (473 aa).

Substrate is bound by residues Asn116 and Thr166. The active-site Proton acceptor is Lys168. Position 170 (Lys170) interacts with substrate. Positions 194, 196, and 197 each coordinate Mg(2+). Lys194 is subject to N6-carboxylysine. His287 functions as the Proton acceptor in the catalytic mechanism. Substrate is bound by residues Arg288, His320, and Ser372.

The protein belongs to the RuBisCO large chain family. Type I subfamily. In terms of assembly, heterohexadecamer of 8 large chains and 8 small chains. The cofactor is Mg(2+).

It catalyses the reaction 2 (2R)-3-phosphoglycerate + 2 H(+) = D-ribulose 1,5-bisphosphate + CO2 + H2O. It carries out the reaction D-ribulose 1,5-bisphosphate + O2 = 2-phosphoglycolate + (2R)-3-phosphoglycerate + 2 H(+). Its function is as follows. RuBisCO catalyzes two reactions: the carboxylation of D-ribulose 1,5-bisphosphate, the primary event in carbon dioxide fixation, as well as the oxidative fragmentation of the pentose substrate. Both reactions occur simultaneously and in competition at the same active site. The protein is Ribulose bisphosphate carboxylase large chain of Nitrosomonas eutropha (strain DSM 101675 / C91 / Nm57).